A 67-amino-acid polypeptide reads, in one-letter code: Large ribosomal subunit protein uL29c (67 aa).

Belongs to the universal ribosomal protein uL29 family.

The protein resides in the plastid. Its subcellular location is the chloroplast. The sequence is that of Large ribosomal subunit protein uL29c (rpl29) from Porphyra purpurea (Red seaweed).